Here is a 247-residue protein sequence, read N- to C-terminus: Cell division protein ZapD (247 aa).

It belongs to the ZapD family. Interacts with FtsZ.

The protein localises to the cytoplasm. Cell division factor that enhances FtsZ-ring assembly. Directly interacts with FtsZ and promotes bundling of FtsZ protofilaments, with a reduction in FtsZ GTPase activity. This Salmonella agona (strain SL483) protein is Cell division protein ZapD.